Reading from the N-terminus, the 561-residue chain is Urocanate hydratase (561 aa).

Residues 52-53 (GG), Gln130, 176-178 (GMG), Glu196, Arg201, 242-243 (NA), 263-267 (QTSAH), 273-274 (YL), and Tyr322 contribute to the NAD(+) site. The active site involves Cys410. Gly492 serves as a coordination point for NAD(+).

Belongs to the urocanase family. It depends on NAD(+) as a cofactor.

The protein localises to the cytoplasm. It catalyses the reaction 4-imidazolone-5-propanoate = trans-urocanate + H2O. It participates in amino-acid degradation; L-histidine degradation into L-glutamate; N-formimidoyl-L-glutamate from L-histidine: step 2/3. Catalyzes the conversion of urocanate to 4-imidazolone-5-propionate. In Salmonella typhi, this protein is Urocanate hydratase.